Here is a 152-residue protein sequence, read N- to C-terminus: SMN complex subunit smn1 (152 aa).

The segment at 26 to 51 (KKYHSIEAKGGVSDPDSRLDGEKLIS) is interacts with yip11/gem2. Residues 88–110 (DNKGLSDEKPETRAAETHQEFME) are disordered. The span at 91–108 (GLSDEKPETRAAETHQEF) shows a compositional bias: basic and acidic residues. The segment at 130-152 (SWYYAGYYTGLAEGLAKSEQRKD) is may interact with gem8.

The protein belongs to the SMN family. In terms of assembly, homooligomer; may form homodimers and homotetramers. Part of the core SMN complex at least composed of smn1, yip11/gem2, gem6, gem7 and gem8. Part of the SMN-Sm complex. Interacts with yip11/gem2; the interaction is direct. Interacts with gem8; the interaction is direct. Interacts with proteins of the Sm complex, including smn1, smb1, smd1, smd2 and smd3.

It is found in the nucleus. Functionally, the SMN complex catalyzes the assembly of small nuclear ribonucleoproteins (snRNPs), the building blocks of the spliceosome, and thereby plays an important role in the splicing of cellular pre-mRNAs. Most spliceosomal snRNPs contain a common set of Sm proteins smb1, smd1, smd2, smd3, sme1, smf1 and smg1 that assemble in a heptameric protein ring on the Sm site of the small nuclear RNA to form the core snRNP (Sm core). In the cytosol, the Sm proteins smd1, smd2, sme1, smf1 and smg1 (5Sm) are trapped in an inactive 6S pICln-Sm complex by the chaperone saf5 that controls the assembly of the core snRNP. To assemble core snRNPs, the SMN complex accepts the trapped 5Sm proteins from saf5 forming an intermediate. Binding of snRNA inside 5Sm triggers eviction of the SMN complex, thereby allowing binding of smd3 and smb1 to complete assembly of the core snRNP. Within the SMN complex, smn1 acts as a structural backbone and together with yip11/gem2 it gathers the Sm complex subunits. The protein is SMN complex subunit smn1 of Schizosaccharomyces pombe (strain 972 / ATCC 24843) (Fission yeast).